Here is a 148-residue protein sequence, read N- to C-terminus: MKTVEIYTDGACKKNPGPGGWGAILIYGKNEKEIYGGELDTTNNRMELMAAIEALRALKQGCKVELYTDSQYVRKGITEWMQNWIKKGWRTSGGDPVKNVDLWQALDKERNKHDISWRWVKGHSGHPLNERADELANLGVKEALGETG.

Positions 1 to 141 (MKTVEIYTDG…ADELANLGVK (141 aa)) constitute an RNase H type-1 domain. Mg(2+) contacts are provided by aspartate 9, glutamate 47, aspartate 69, and aspartate 133.

This sequence belongs to the RNase H family. As to quaternary structure, monomer. It depends on Mg(2+) as a cofactor.

Its subcellular location is the cytoplasm. It carries out the reaction Endonucleolytic cleavage to 5'-phosphomonoester.. Its function is as follows. Endonuclease that specifically degrades the RNA of RNA-DNA hybrids. The chain is Ribonuclease H from Hahella chejuensis (strain KCTC 2396).